Reading from the N-terminus, the 208-residue chain is Protein-L-isoaspartate O-methyltransferase (208 aa).

S59 is an active-site residue.

This sequence belongs to the methyltransferase superfamily. L-isoaspartyl/D-aspartyl protein methyltransferase family.

The protein localises to the cytoplasm. It carries out the reaction [protein]-L-isoaspartate + S-adenosyl-L-methionine = [protein]-L-isoaspartate alpha-methyl ester + S-adenosyl-L-homocysteine. In terms of biological role, catalyzes the methyl esterification of L-isoaspartyl residues in peptides and proteins that result from spontaneous decomposition of normal L-aspartyl and L-asparaginyl residues. It plays a role in the repair and/or degradation of damaged proteins. The sequence is that of Protein-L-isoaspartate O-methyltransferase from Vibrio vulnificus (strain CMCP6).